A 512-amino-acid polypeptide reads, in one-letter code: Glutathione-binding protein GsiB (512 aa).

The first 26 residues, 1–26, serve as a signal peptide directing secretion; the sequence is MARAVHRSGLVALGIATALMASCAFA.

The protein belongs to the bacterial solute-binding protein 5 family. As to quaternary structure, the complex is composed of two ATP-binding proteins (GsiA), two transmembrane proteins (GsiC and GsiD) and a solute-binding protein (GsiB).

Its subcellular location is the periplasm. Functionally, part of the ABC transporter complex GsiABCD involved in glutathione import. Binds glutathione. The chain is Glutathione-binding protein GsiB from Escherichia coli O157:H7.